Here is a 621-residue protein sequence, read N- to C-terminus: MERPHPSSIPTTPGVYLYKDSQGRIIYVGKARNLRKRVLSYFRDGLVITPKTKAMMNHANLLETISTNTEKEALLLEASLIKKHRPRYNIVLRDDKQYLLFRIQKGIPFPRLEIVRQSYKDNAVYFGPFTSGTSVRDTWKFIHKIFPLRRCSDKVFNNRIRPCLYFYLQQCLAPCTEEVDPKDYAVLIQKVELFLSGKSKELVELLQKDMLYASEALEFEKAATLRDQIQAIKHTIERQSVVLPEGGDMDVIGIAVVNNGLALGFLFVREGKLLDGRTFFWPGLELDDGPELLGSFLSQFYSPISSIPPRIIVPWLPESTNNKDEISEDTFETLKYVLEDIRNSTVRIEVPKNIIESNLVDIAVTNAREAVQTKLGEPMSAKLAKVFHTDKPIFRIECVDVSHISGTNTRVGMVVFEDSQPLKNDYRIYSTTEDNSPFIKGDDYAALASWAKRRIQSGPPWADLVLIDGGKGQINAVQRVFNEHHLKDVFILAGIAKARNEEGRVDRRAGNIGDKIFVVGRMNPLTLKEGSPELLFLQYVRDTAHNFVLGKHRKARKNTALLGELLRIPGIGQATAKLLWSHFKTVEAMTCATIKDLEAIPGIGEAKARMLAERLQSLRNQ.

Residues 11-90 enclose the GIY-YIG domain; that stretch reads TTPGVYLYKD…IKKHRPRYNI (80 aa). One can recognise a UVR domain in the interval 200–235; sequence KELVELLQKDMLYASEALEFEKAATLRDQIQAIKHT.

Belongs to the UvrC family. In terms of assembly, interacts with UvrB in an incision complex.

It is found in the cytoplasm. In terms of biological role, the UvrABC repair system catalyzes the recognition and processing of DNA lesions. UvrC both incises the 5' and 3' sides of the lesion. The N-terminal half is responsible for the 3' incision and the C-terminal half is responsible for the 5' incision. The sequence is that of UvrABC system protein C from Lawsonia intracellularis (strain PHE/MN1-00).